Here is an 88-residue protein sequence, read N- to C-terminus: Pape peptide (88 aa).

The N-terminal stretch at 1–22 (MNRKTLLVIFFVTLLIAEEVNS) is a signal peptide. The propeptide occupies 23–45 (FRLGGFLKKIWRSKLVKRLRSKG). Residues 49–88 (LKEALAPEPAPEPAPEPAPEAAPEAAPEPAAAAPERRRRR) form a disordered region. Residues 56 to 68 (EPAPEPAPEPAPE) show a composition bias toward pro residues. PAPE repeat units lie at residues 57 to 60 (PAPE), 61 to 64 (PAPE), and 65 to 68 (PAPE). The segment covering 69 to 81 (AAPEAAPEPAAAA) has biased composition (low complexity).

In terms of tissue distribution, expressed by the venom gland.

The protein localises to the secreted. The chain is Pape peptide from Tityus serrulatus (Brazilian scorpion).